The following is a 607-amino-acid chain: DNA mismatch repair protein MutL (607 aa).

Positions 374-411 (RTEAGNEHVPSANRIQPPDPSIDMPDEPVPEQTDEPVA) are disordered. A compositionally biased stretch (acidic residues) spans 397-407 (MPDEPVPEQTD).

The protein belongs to the DNA mismatch repair MutL/HexB family.

In terms of biological role, this protein is involved in the repair of mismatches in DNA. It is required for dam-dependent methyl-directed DNA mismatch repair. May act as a 'molecular matchmaker', a protein that promotes the formation of a stable complex between two or more DNA-binding proteins in an ATP-dependent manner without itself being part of a final effector complex. The chain is DNA mismatch repair protein MutL from Exiguobacterium sibiricum (strain DSM 17290 / CCUG 55495 / CIP 109462 / JCM 13490 / 255-15).